A 101-amino-acid polypeptide reads, in one-letter code: Small ribosomal subunit protein uS14 (101 aa).

The protein belongs to the universal ribosomal protein uS14 family. As to quaternary structure, part of the 30S ribosomal subunit. Contacts proteins S3 and S10.

In terms of biological role, binds 16S rRNA, required for the assembly of 30S particles and may also be responsible for determining the conformation of the 16S rRNA at the A site. In Erythrobacter litoralis (strain HTCC2594), this protein is Small ribosomal subunit protein uS14.